The primary structure comprises 221 residues: Probable septum site-determining protein MinC (221 aa).

It belongs to the MinC family. As to quaternary structure, interacts with MinD and FtsZ.

Its function is as follows. Cell division inhibitor that blocks the formation of polar Z ring septums. Rapidly oscillates between the poles of the cell to destabilize FtsZ filaments that have formed before they mature into polar Z rings. Prevents FtsZ polymerization. This is Probable septum site-determining protein MinC from Prochlorococcus marinus (strain SARG / CCMP1375 / SS120).